Here is a 281-residue protein sequence, read N- to C-terminus: Diaminopimelate epimerase (281 aa).

Residues asparagine 13, glutamine 46, and asparagine 66 each coordinate substrate. The active-site Proton donor is cysteine 75. Residues 76–77 (GN), asparagine 160, asparagine 193, and 211–212 (ER) contribute to the substrate site. Cysteine 220 serves as the catalytic Proton acceptor. 221–222 (GT) is a binding site for substrate.

Belongs to the diaminopimelate epimerase family. In terms of assembly, homodimer.

Its subcellular location is the cytoplasm. It catalyses the reaction (2S,6S)-2,6-diaminopimelate = meso-2,6-diaminopimelate. It participates in amino-acid biosynthesis; L-lysine biosynthesis via DAP pathway; DL-2,6-diaminopimelate from LL-2,6-diaminopimelate: step 1/1. Catalyzes the stereoinversion of LL-2,6-diaminopimelate (L,L-DAP) to meso-diaminopimelate (meso-DAP), a precursor of L-lysine and an essential component of the bacterial peptidoglycan. This chain is Diaminopimelate epimerase, found in Acinetobacter baumannii (strain ATCC 17978 / DSM 105126 / CIP 53.77 / LMG 1025 / NCDC KC755 / 5377).